The chain runs to 93 residues: uncharacterized protein (93 aa).

An N-terminal signal peptide occupies residues 1 to 11 (MALMVLMALVG). Cys-12 carries N-palmitoyl cysteine lipidation. A lipid anchor (S-diacylglycerol cysteine) is attached at Cys-12.

The protein localises to the cell membrane. This is an uncharacterized protein from Escherichia coli O6:K15:H31 (strain 536 / UPEC).